Consider the following 179-residue polypeptide: Protein GrpE (179 aa).

Residues 1 to 29 are disordered; that stretch reads MQDQDKYAEQAASIEDPVTAEAASATTPT.

This sequence belongs to the GrpE family. In terms of assembly, homodimer.

It is found in the cytoplasm. In terms of biological role, participates actively in the response to hyperosmotic and heat shock by preventing the aggregation of stress-denatured proteins, in association with DnaK and GrpE. It is the nucleotide exchange factor for DnaK and may function as a thermosensor. Unfolded proteins bind initially to DnaJ; upon interaction with the DnaJ-bound protein, DnaK hydrolyzes its bound ATP, resulting in the formation of a stable complex. GrpE releases ADP from DnaK; ATP binding to DnaK triggers the release of the substrate protein, thus completing the reaction cycle. Several rounds of ATP-dependent interactions between DnaJ, DnaK and GrpE are required for fully efficient folding. The protein is Protein GrpE of Janthinobacterium sp. (strain Marseille) (Minibacterium massiliensis).